Reading from the N-terminus, the 441-residue chain is Putative serine/threonine-protein kinase F31E3.2 (441 aa).

The span at 1-16 (MGNVATRKRPGCHHHI) shows a compositional bias: basic residues. The disordered stretch occupies residues 1-41 (MGNVATRKRPGCHHHIGRNEENLDDDEDGPAKKRLRIGEPQ). Positions 126-381 (FVLERQLGRG…FTVLHAHPFF (256 aa)) constitute a Protein kinase domain. ATP is bound by residues 132-140 (LGRGSFGVV) and Lys-156. The active-site Proton acceptor is Asp-253.

This sequence belongs to the protein kinase superfamily. Ser/Thr protein kinase family.

The enzyme catalyses L-seryl-[protein] + ATP = O-phospho-L-seryl-[protein] + ADP + H(+). It catalyses the reaction L-threonyl-[protein] + ATP = O-phospho-L-threonyl-[protein] + ADP + H(+). The chain is Putative serine/threonine-protein kinase F31E3.2 from Caenorhabditis elegans.